Consider the following 118-residue polypeptide: Large ribosomal subunit protein bL20 (118 aa).

This sequence belongs to the bacterial ribosomal protein bL20 family.

In terms of biological role, binds directly to 23S ribosomal RNA and is necessary for the in vitro assembly process of the 50S ribosomal subunit. It is not involved in the protein synthesizing functions of that subunit. The sequence is that of Large ribosomal subunit protein bL20 from Bacillus anthracis (strain CDC 684 / NRRL 3495).